The primary structure comprises 129 residues: Large-conductance mechanosensitive channel (129 aa).

The next 3 membrane-spanning stretches (helical) occupy residues phenylalanine 8–threonine 28, isoleucine 30–valine 50, and glycine 67–isoleucine 87.

Belongs to the MscL family. Homopentamer.

The protein resides in the cell membrane. In terms of biological role, channel that opens in response to stretch forces in the membrane lipid bilayer. May participate in the regulation of osmotic pressure changes within the cell. The polypeptide is Large-conductance mechanosensitive channel (Oenococcus oeni (strain ATCC BAA-331 / PSU-1)).